The following is a 160-amino-acid chain: uncharacterized protein (160 aa).

Positions 1 to 29 are cleaved as a signal peptide; sequence MCGLGIVPMVKPALFGMLILVIGTSTVQA.

This is an uncharacterized protein from Sinorhizobium fredii (strain NBRC 101917 / NGR234).